The chain runs to 306 residues: Non-specific ribonucleoside hydrolase RihC (306 aa).

H235 is an active-site residue.

It belongs to the IUNH family. RihC subfamily.

Hydrolyzes both purine and pyrimidine ribonucleosides with a broad-substrate specificity. The sequence is that of Non-specific ribonucleoside hydrolase RihC from Salmonella paratyphi C (strain RKS4594).